Consider the following 87-residue polypeptide: Small ribosomal subunit protein uS17 (87 aa).

Belongs to the universal ribosomal protein uS17 family. As to quaternary structure, part of the 30S ribosomal subunit.

In terms of biological role, one of the primary rRNA binding proteins, it binds specifically to the 5'-end of 16S ribosomal RNA. In Alkalilimnicola ehrlichii (strain ATCC BAA-1101 / DSM 17681 / MLHE-1), this protein is Small ribosomal subunit protein uS17.